The sequence spans 517 residues: Endoglycoceramidase (517 aa).

The N-terminal stretch at Met-1 to Gly-17 is a signal peptide. Asn-99 carries N-linked (GlcNAc...) asparagine glycosylation. The active-site Proton donor is Glu-230. N-linked (GlcNAc...) asparagine glycosylation is found at Asn-298, Asn-380, and Asn-393.

Belongs to the glycosyl hydrolase 5 (cellulase A) family. Expressed uniformly in digestive cells, tentacles and peduncle regions suggesting expression in the endoderm throughout the whole body (at protein level).

The protein resides in the secreted. The enzyme catalyses an oligoglycosyl-(1-&gt;4)-beta-D-glucosyl-(1&lt;-&gt;1)-ceramide + H2O = an oligoglycosyl-(1-&gt;4)-D-glucose + an N-acyl-sphingoid base. Cu(2+), zinc, manganese, calcium, magnesium and EDTA have no significant effects on enzyme activity. Enzyme requires presence of detergents such as Triton X-100 and Lubrol PX for the hydrolysis of glycosphingolipids. Taurodeoxycholate strongly inhibits the enzyme activity. In terms of biological role, hydrolysis of the glycosidic linkage between oligosaccharides and ceramides of glycosphingolipids, optimal substrates appear to be the glycosphingolipids with a gangliotetraose structure. This chain is Endoglycoceramidase, found in Hydra vulgaris (Hydra).